A 680-amino-acid chain; its full sequence is Methionine--tRNA ligase (680 aa).

The short motif at 15–25 is the 'HIGH' region element; that stretch reads PYANGPVHIGH. 4 residues coordinate Zn(2+): cysteine 147, cysteine 150, cysteine 160, and cysteine 163. Positions 332–336 match the 'KMSKS' region motif; sequence KISTS. Residue threonine 335 coordinates ATP. A tRNA-binding domain is found at 579 to 680; sequence DFLKLDIRVG…AEVAPGSQVK (102 aa).

Belongs to the class-I aminoacyl-tRNA synthetase family. MetG type 1 subfamily. In terms of assembly, homodimer. The cofactor is Zn(2+).

Its subcellular location is the cytoplasm. It catalyses the reaction tRNA(Met) + L-methionine + ATP = L-methionyl-tRNA(Met) + AMP + diphosphate. In terms of biological role, is required not only for elongation of protein synthesis but also for the initiation of all mRNA translation through initiator tRNA(fMet) aminoacylation. The chain is Methionine--tRNA ligase from Porphyromonas gingivalis (strain ATCC 33277 / DSM 20709 / CIP 103683 / JCM 12257 / NCTC 11834 / 2561).